The primary structure comprises 215 residues: MKTVLLTGFDPFGGESINPAWEVAKSLHEKTIGEYKIISKQVPTVFHKSISVLKEYIEELAPEFIICIGQAGGRPNITIERVAINIDDARIADNEGNQPVDVPVVEEGPAAYWSTLPMKAIVKKLQEEGIPASVSQTAGTFVCNHLFYGLMHELEKHDTKMKGGFIHIPFLPEQASNYPGQPSMSLSTIRKGIELAVEVTTTVEVDIVEVGGATH.

Active-site residues include glutamate 80, cysteine 143, and histidine 167.

Belongs to the peptidase C15 family. In terms of assembly, homotetramer.

It localises to the cytoplasm. The enzyme catalyses Release of an N-terminal pyroglutamyl group from a polypeptide, the second amino acid generally not being Pro.. Removes 5-oxoproline from various penultimate amino acid residues except L-proline. The chain is Pyrrolidone-carboxylate peptidase from Bacillus cereus (strain 03BB102).